The chain runs to 344 residues: L-threonine 3-dehydrogenase (344 aa).

C42 provides a ligand contact to Zn(2+). Active-site charge relay system residues include T44 and H47. Zn(2+) is bound by residues H67, E68, C97, C100, C103, and C111. Residues I179, D199, R204, 266-268, and 290-291 contribute to the NAD(+) site; these read LGI and IY.

This sequence belongs to the zinc-containing alcohol dehydrogenase family. As to quaternary structure, homotetramer. It depends on Zn(2+) as a cofactor.

The protein resides in the cytoplasm. The enzyme catalyses L-threonine + NAD(+) = (2S)-2-amino-3-oxobutanoate + NADH + H(+). The protein operates within amino-acid degradation; L-threonine degradation via oxydo-reductase pathway; glycine from L-threonine: step 1/2. In terms of biological role, catalyzes the NAD(+)-dependent oxidation of L-threonine to 2-amino-3-ketobutyrate. This Mesorhizobium japonicum (strain LMG 29417 / CECT 9101 / MAFF 303099) (Mesorhizobium loti (strain MAFF 303099)) protein is L-threonine 3-dehydrogenase.